The primary structure comprises 151 residues: Large ribosomal subunit protein bL9 (151 aa).

Belongs to the bacterial ribosomal protein bL9 family.

In terms of biological role, binds to the 23S rRNA. This Bordetella pertussis (strain Tohama I / ATCC BAA-589 / NCTC 13251) protein is Large ribosomal subunit protein bL9.